A 160-amino-acid polypeptide reads, in one-letter code: 6,7-dimethyl-8-ribityllumazine synthase (160 aa).

5-amino-6-(D-ribitylamino)uracil contacts are provided by residues Phe23, 61 to 63, and 85 to 87; these read SFE and AVI. Residue 90–91 participates in (2S)-2-hydroxy-3-oxobutyl phosphate binding; sequence DT. His93 (proton donor) is an active-site residue. Phe118 contributes to the 5-amino-6-(D-ribitylamino)uracil binding site. Residue Arg132 participates in (2S)-2-hydroxy-3-oxobutyl phosphate binding.

Belongs to the DMRL synthase family.

It catalyses the reaction (2S)-2-hydroxy-3-oxobutyl phosphate + 5-amino-6-(D-ribitylamino)uracil = 6,7-dimethyl-8-(1-D-ribityl)lumazine + phosphate + 2 H2O + H(+). It participates in cofactor biosynthesis; riboflavin biosynthesis; riboflavin from 2-hydroxy-3-oxobutyl phosphate and 5-amino-6-(D-ribitylamino)uracil: step 1/2. Functionally, catalyzes the formation of 6,7-dimethyl-8-ribityllumazine by condensation of 5-amino-6-(D-ribitylamino)uracil with 3,4-dihydroxy-2-butanone 4-phosphate. This is the penultimate step in the biosynthesis of riboflavin. This Synechococcus sp. (strain CC9605) protein is 6,7-dimethyl-8-ribityllumazine synthase.